Reading from the N-terminus, the 36-residue chain is Lambda-hexatoxin-Hv1b (36 aa).

Cystine bridges form between C3–C17, C10–C22, C13–C14, and C16–C33.

The protein belongs to the neurotoxin 11 (kappa toxin) family. In terms of tissue distribution, expressed by the venom gland.

Its subcellular location is the secreted. This excitatory toxin inhibits insect calcium-activated potassium (KCa) channels (Slo-type). This is Lambda-hexatoxin-Hv1b from Hadronyche versuta (Blue mountains funnel-web spider).